A 217-amino-acid chain; its full sequence is Protein-L-isoaspartate O-methyltransferase (217 aa).

Ser64 is a catalytic residue.

It belongs to the methyltransferase superfamily. L-isoaspartyl/D-aspartyl protein methyltransferase family.

Its subcellular location is the cytoplasm. It carries out the reaction [protein]-L-isoaspartate + S-adenosyl-L-methionine = [protein]-L-isoaspartate alpha-methyl ester + S-adenosyl-L-homocysteine. Functionally, catalyzes the methyl esterification of L-isoaspartyl residues in peptides and proteins that result from spontaneous decomposition of normal L-aspartyl and L-asparaginyl residues. It plays a role in the repair and/or degradation of damaged proteins. The protein is Protein-L-isoaspartate O-methyltransferase of Nitrobacter winogradskyi (strain ATCC 25391 / DSM 10237 / CIP 104748 / NCIMB 11846 / Nb-255).